The following is a 416-amino-acid chain: Phosphoglycerate kinase (416 aa).

Substrate-binding positions include 24–26, arginine 40, 63–66, arginine 126, and arginine 166; these read DLN and HLGR. ATP-binding positions include lysine 216, glycine 304, glutamate 335, and 364–367; that span reads GGDS.

The protein belongs to the phosphoglycerate kinase family. In terms of assembly, monomer.

Its subcellular location is the cytoplasm. The enzyme catalyses (2R)-3-phosphoglycerate + ATP = (2R)-3-phospho-glyceroyl phosphate + ADP. It participates in carbohydrate degradation; glycolysis; pyruvate from D-glyceraldehyde 3-phosphate: step 2/5. The polypeptide is Phosphoglycerate kinase (Mycobacterium leprae (strain Br4923)).